The chain runs to 260 residues: 3'-5' ssDNA/RNA exonuclease TatD (260 aa).

A divalent metal cation-binding residues include Glu92, His128, and His153.

It belongs to the metallo-dependent hydrolases superfamily. TatD-type hydrolase family. TatD subfamily. In terms of assembly, monomer. Requires Mg(2+) as cofactor.

It is found in the cytoplasm. Functionally, 3'-5' exonuclease that prefers single-stranded DNA and RNA. May play a role in the H(2)O(2)-induced DNA damage repair. The sequence is that of 3'-5' ssDNA/RNA exonuclease TatD from Pantoea sp. (strain At-9b).